A 131-amino-acid polypeptide reads, in one-letter code: Small ribosomal subunit protein uS8 (131 aa).

Belongs to the universal ribosomal protein uS8 family. In terms of assembly, part of the 30S ribosomal subunit. Contacts proteins S5 and S12.

Its function is as follows. One of the primary rRNA binding proteins, it binds directly to 16S rRNA central domain where it helps coordinate assembly of the platform of the 30S subunit. The sequence is that of Small ribosomal subunit protein uS8 from Paraburkholderia xenovorans (strain LB400).